A 39-amino-acid chain; its full sequence is Photosystem II reaction center protein I (39 aa).

A helical membrane pass occupies residues 6-26 (ISVYSVVFFFIGIFMFGFLAS).

This sequence belongs to the PsbI family. PSII is composed of 1 copy each of membrane proteins PsbA, PsbB, PsbC, PsbD, PsbE, PsbF, PsbH, PsbI, PsbJ, PsbK, PsbL, PsbM, PsbT, PsbX, PsbY, PsbZ, Psb30/Ycf12, peripheral proteins PsbO, CyanoQ (PsbQ), PsbU, PsbV and a large number of cofactors. It forms dimeric complexes.

The protein localises to the cellular thylakoid membrane. One of the components of the core complex of photosystem II (PSII), required for its stability and/or assembly. PSII is a light-driven water:plastoquinone oxidoreductase that uses light energy to abstract electrons from H(2)O, generating O(2) and a proton gradient subsequently used for ATP formation. It consists of a core antenna complex that captures photons, and an electron transfer chain that converts photonic excitation into a charge separation. This chain is Photosystem II reaction center protein I, found in Synechococcus sp. (strain RCC307).